Consider the following 686-residue polypeptide: Amphiphysin (686 aa).

2 coiled-coil regions span residues 10–83 (AKNV…SLHE) and 144–191 (DYDS…QEEL). The region spanning 24–240 (VLQKLGKADE…MTKLGDQHAD (217 aa)) is the BAR domain. Disordered stretches follow at residues 244-314 (SIQG…PTKE), 421-441 (AETE…ATAA), and 483-597 (VEEA…AGAV). Residue Ser-252 is modified to Phosphoserine. Residue Thr-260 is modified to Phosphothreonine. Over residues 261-274 (PSPPEEPSPLPSPT) the composition is skewed to pro residues. Ser-262, Ser-268, Ser-272, and Ser-276 each carry phosphoserine. Position 280 is a phosphothreonine (Thr-280). Residues 424–441 (EQALPTEPQAEEPPATAA) show a composition bias toward low complexity. Ser-500 is modified (phosphoserine). Residues 541–562 (SNHEGEGEHQETATGTEPREAA) show a composition bias toward basic and acidic residues. An SH3 domain is found at 613–686 (GFLYKVETLH…FPENFTRRLE (74 aa)). Ser-629 bears the Phosphoserine mark.

As to quaternary structure, heterodimer with BIN1. Binds SH3GLB1. Interacts with REPS1 and SGIP1. Binds AP2A2. Interacts with AP2B1. Interacts with DNM1 and SYNJ1.

It is found in the cytoplasmic vesicle. It localises to the secretory vesicle. The protein localises to the synaptic vesicle membrane. The protein resides in the cytoplasm. Its subcellular location is the cytoskeleton. May participate in mechanisms of regulated exocytosis in synapses and certain endocrine cell types. May control the properties of the membrane associated cytoskeleton. The protein is Amphiphysin (Amph) of Mus musculus (Mouse).